A 247-amino-acid polypeptide reads, in one-letter code: uncharacterized protein (247 aa).

This is an uncharacterized protein from Acidianus bottle-shaped virus (isolate Italy/Pozzuoli) (ABV).